The sequence spans 94 residues: Putative defensin-like protein 88 (94 aa).

The first 26 residues, 1–26 (MATQKFSYFLLVLLMVFALILPSIIS), serve as a signal peptide directing secretion. 3 cysteine pairs are disulfide-bonded: C32-C72, C38-C59, and C48-C71.

Belongs to the DEFL family.

The protein localises to the secreted. The protein is Putative defensin-like protein 88 of Arabidopsis thaliana (Mouse-ear cress).